Consider the following 94-residue polypeptide: Large ribosomal subunit protein bL25 (94 aa).

Belongs to the bacterial ribosomal protein bL25 family. As to quaternary structure, part of the 50S ribosomal subunit; part of the 5S rRNA/L5/L18/L25 subcomplex. Contacts the 5S rRNA. Binds to the 5S rRNA independently of L5 and L18.

Functionally, this is one of the proteins that binds to the 5S RNA in the ribosome where it forms part of the central protuberance. In Salmonella agona (strain SL483), this protein is Large ribosomal subunit protein bL25.